A 745-amino-acid chain; its full sequence is uncharacterized protein (745 aa).

The 99-residue stretch at 158–256 folds into the HTH araC/xylS-type domain; it reads NQVCDYIELH…HQTPKQYRGD (99 aa). 2 DNA-binding regions (H-T-H motif) span residues 175-196 and 223-246; these read SELSEYVGWSESHLSKKFAESL and ITDIALQNGFSSAASFARTFKHIT.

This is an uncharacterized protein from Staphylococcus aureus.